We begin with the raw amino-acid sequence, 347 residues long: Phenylalanine--tRNA ligase alpha subunit (347 aa).

E265 serves as a coordination point for Mg(2+).

This sequence belongs to the class-II aminoacyl-tRNA synthetase family. Phe-tRNA synthetase alpha subunit type 1 subfamily. In terms of assembly, tetramer of two alpha and two beta subunits. Mg(2+) serves as cofactor.

Its subcellular location is the cytoplasm. The enzyme catalyses tRNA(Phe) + L-phenylalanine + ATP = L-phenylalanyl-tRNA(Phe) + AMP + diphosphate + H(+). The chain is Phenylalanine--tRNA ligase alpha subunit from Mycolicibacterium paratuberculosis (strain ATCC BAA-968 / K-10) (Mycobacterium paratuberculosis).